The following is a 115-amino-acid chain: MPVFTIRTNVCRDSVPDTLLSDLTKQLAKATGKPAEYIAIHIVPDQIMSFGDSTDPCAVCSLCSIGKIGGPQNKSYTKLLCDILTKQLNIPANRVYINYYDLNAANVGWNGSTFA.

Residue proline 2 is the Proton acceptor; via imino nitrogen of the active site. Substrate-binding residues include lysine 33, isoleucine 65, and asparagine 98.

This sequence belongs to the MIF family. As to quaternary structure, homotrimer. Ubiquitous. Detected throughout embryogenesis. Detected in adult spleen, liver, kidney, heart, brain, intestine, testis and lung.

It is found in the secreted. Its subcellular location is the cytoplasm. It carries out the reaction 3-phenylpyruvate = enol-phenylpyruvate. The enzyme catalyses L-dopachrome = 5,6-dihydroxyindole-2-carboxylate. In terms of biological role, pro-inflammatory cytokine. Involved in the innate immune response to bacterial pathogens. The expression of MIF at sites of inflammation suggests a role as mediator in regulating the function of macrophages in host defense. Has phenylpyruvate tautomerase and dopachrome tautomerase activity (in vitro), but the physiological substrate is not known. It is not clear whether the tautomerase activity has any physiological relevance, and whether it is important for cytokine activity. Required for normal neural development during embryogenesis. The sequence is that of Macrophage migration inhibitory factor (mif) from Xenopus laevis (African clawed frog).